Reading from the N-terminus, the 311-residue chain is Methionyl-tRNA formyltransferase (311 aa).

(6S)-5,6,7,8-tetrahydrofolate is bound at residue 112-115 (SLLP).

This sequence belongs to the Fmt family.

It catalyses the reaction L-methionyl-tRNA(fMet) + (6R)-10-formyltetrahydrofolate = N-formyl-L-methionyl-tRNA(fMet) + (6S)-5,6,7,8-tetrahydrofolate + H(+). Functionally, attaches a formyl group to the free amino group of methionyl-tRNA(fMet). The formyl group appears to play a dual role in the initiator identity of N-formylmethionyl-tRNA by promoting its recognition by IF2 and preventing the misappropriation of this tRNA by the elongation apparatus. In Bradyrhizobium sp. (strain ORS 278), this protein is Methionyl-tRNA formyltransferase.